Here is a 445-residue protein sequence, read N- to C-terminus: Phosphoglucosamine mutase (445 aa).

Ser-102 (phosphoserine intermediate) is an active-site residue. Ser-102, Asp-241, Asp-243, and Asp-245 together coordinate Mg(2+). Residue Ser-102 is modified to Phosphoserine.

This sequence belongs to the phosphohexose mutase family. Requires Mg(2+) as cofactor. In terms of processing, activated by phosphorylation.

It catalyses the reaction alpha-D-glucosamine 1-phosphate = D-glucosamine 6-phosphate. Catalyzes the conversion of glucosamine-6-phosphate to glucosamine-1-phosphate. This chain is Phosphoglucosamine mutase, found in Edwardsiella ictaluri (strain 93-146).